The chain runs to 49 residues: Defensin Tk-AMP-D2 (49 aa).

4 disulfide bridges follow: C3-C49, C14-C34, C20-C43, and C24-C45.

Functionally, plant defense peptide. This chain is Defensin Tk-AMP-D2, found in Triticum kiharae (Wheat).